The following is a 171-amino-acid chain: Endoribonuclease YbeY (171 aa).

Zn(2+)-binding residues include histidine 130, histidine 134, and histidine 140.

The protein belongs to the endoribonuclease YbeY family. It depends on Zn(2+) as a cofactor.

It is found in the cytoplasm. Functionally, single strand-specific metallo-endoribonuclease involved in late-stage 70S ribosome quality control and in maturation of the 3' terminus of the 16S rRNA. This is Endoribonuclease YbeY from Neisseria meningitidis serogroup C / serotype 2a (strain ATCC 700532 / DSM 15464 / FAM18).